The primary structure comprises 97 residues: Aspartyl/glutamyl-tRNA(Asn/Gln) amidotransferase subunit C (97 aa).

This sequence belongs to the GatC family. In terms of assembly, heterotrimer of A, B and C subunits.

The enzyme catalyses L-glutamyl-tRNA(Gln) + L-glutamine + ATP + H2O = L-glutaminyl-tRNA(Gln) + L-glutamate + ADP + phosphate + H(+). It carries out the reaction L-aspartyl-tRNA(Asn) + L-glutamine + ATP + H2O = L-asparaginyl-tRNA(Asn) + L-glutamate + ADP + phosphate + 2 H(+). Its function is as follows. Allows the formation of correctly charged Asn-tRNA(Asn) or Gln-tRNA(Gln) through the transamidation of misacylated Asp-tRNA(Asn) or Glu-tRNA(Gln) in organisms which lack either or both of asparaginyl-tRNA or glutaminyl-tRNA synthetases. The reaction takes place in the presence of glutamine and ATP through an activated phospho-Asp-tRNA(Asn) or phospho-Glu-tRNA(Gln). This Parasynechococcus marenigrum (strain WH8102) protein is Aspartyl/glutamyl-tRNA(Asn/Gln) amidotransferase subunit C.